The following is a 510-amino-acid chain: NAD(P) transhydrogenase subunit alpha (510 aa).

Residues 1–401 (MRIGIPRERL…EEKCTCSPWR (401 aa)) are Cytoplasmic-facing. NAD(+)-binding positions include 120–122 (RIS), Val-175, 195–197 (DTR), Glu-238, and Leu-257. 2 helical membrane passes run 402–422 (KYALMALAIILFGWMASVAPK) and 423–443 (EFLGHFTVFALACVVGYYVVW). Residues 444–452 (NVSHALHTP) lie on the Cytoplasmic side of the membrane. Residues 453–473 (LMSVTNAISGIIVVGALLQIG) traverse the membrane as a helical segment. The Periplasmic segment spans residues 474–476 (QGG). The chain crosses the membrane as a helical span at residues 477–497 (WVSFLSFIAVLIASINIFGGF). Residues 498 to 510 (TVTQRMLKMFRKN) are Cytoplasmic-facing.

This sequence belongs to the AlaDH/PNT family. Heterodimer of an alpha (PntA) and a beta (PntB) chain. Alpha subunit serves as the dimerization unit.

It is found in the cell inner membrane. The catalysed reaction is NAD(+) + NADPH + H(+)(in) = NADH + NADP(+) + H(+)(out). Functionally, the transhydrogenation between NADH and NADP is coupled to respiration and ATP hydrolysis and functions as a proton pump across the membrane. This is NAD(P) transhydrogenase subunit alpha (pntA) from Escherichia coli (strain K12).